A 348-amino-acid chain; its full sequence is Rhodopsin (348 aa).

Met1 is subject to N-acetylmethionine. Residues 1 to 36 are Extracellular-facing; it reads MNGTEGPNFYVPFSNKTGVVRSPFEYPQYYLAEPWQ. Asn2 and Asn15 each carry an N-linked (GlcNAc...) asparagine glycan. A helical membrane pass occupies residues 37–61; the sequence is FSMLAAYMFLLIVLGFPINFLTLYV. At 62–73 the chain is on the cytoplasmic side; sequence TVQHKKLRTPLN. A helical membrane pass occupies residues 74 to 96; that stretch reads YILLNLAVADLFMVFGGFTTTLY. The Extracellular segment spans residues 97–110; the sequence is TSLHGYFVFGPTGC. A disulfide bridge connects residues Cys110 and Cys187. A helical membrane pass occupies residues 111-133; it reads NLEGFFATLGGEIALWSLVVLAI. The short motif at 134–136 is the 'Ionic lock' involved in activated form stabilization element; the sequence is ERY. Over 134–152 the chain is Cytoplasmic; sequence ERYVVVCKPMSNFRFGENH. Residues 153-173 traverse the membrane as a helical segment; it reads AIMGVGLTWVMALACAAPPLV. Residues 174–202 are Extracellular-facing; that stretch reads GWSRYIPEGMQCSCGIDYYTLKPEVNNES. Glu201 contacts Zn(2+). Residues 203–224 form a helical membrane-spanning segment; sequence FVIYMFVVHFTIPMIVIFFCYG. The Cytoplasmic segment spans residues 225 to 252; that stretch reads QLVFTVKEAAAQQQESATTQKAEKEVTR. Residues 253–274 traverse the membrane as a helical segment; that stretch reads MVIIMVIAFLICWVPYASVAFY. At 275-286 the chain is on the extracellular side; sequence IFTHQGFNFGPI. Gln279 lines the Zn(2+) pocket. The chain crosses the membrane as a helical span at residues 287-308; the sequence is FMTLPAFFAKAAAIYNPVIYIM. Lys296 is modified (N6-(retinylidene)lysine). Over 309 to 348 the chain is Cytoplasmic; it reads MNKQFRTCMITTLCCGKNPLGDDEVSASASKTETSQVAPA. S-palmitoyl cysteine attachment occurs at residues Cys322 and Cys323. The interval 330-348 is interaction with SAG; sequence DDEVSASASKTETSQVAPA. Residues Ser334 and Ser338 each carry the phosphoserine modification. Phosphothreonine is present on residues Thr340 and Thr342. A Phosphoserine modification is found at Ser343.

It belongs to the G-protein coupled receptor 1 family. Opsin subfamily. In terms of assembly, homodimer. Interacts (phosphorylated form) with SAG. Interacts with GNAT1. Interacts with GNAT3. SAG and G-proteins compete for a common binding site. Interacts with GRK1. Interacts with PRCD; the interaction promotes PRCD stability. Forms a complex with ASAP1 and ARF4. Forms a complex with ASAP1, RAB11A, Rabin8/RAB3IP, ARF4 and RAB11FIP3; the complex regulates Golgi-to-cilia rhodopsin/RHO transport in photoreceptors. Phosphorylated on some or all of the serine and threonine residues present in the C-terminal region. In terms of processing, contains one covalently linked retinal chromophore. Upon light absorption, the covalently bound 11-cis-retinal is converted to all-trans-retinal. After hydrolysis of the Schiff base and release of the covalently bound all-trans-retinal, active rhodopsin is regenerated by binding of a fresh molecule of 11-cis-retinal.

It is found in the membrane. The protein localises to the cell projection. It localises to the cilium. The protein resides in the photoreceptor outer segment. In terms of biological role, photoreceptor required for image-forming vision at low light intensity. Required for photoreceptor cell viability after birth. Light-induced isomerization of 11-cis to all-trans retinal triggers a conformational change that activates signaling via G-proteins. Subsequent receptor phosphorylation mediates displacement of the bound G-protein alpha subunit by the arrestin SAG and terminates signaling. In Pagophilus groenlandicus (Harp seal), this protein is Rhodopsin (RHO).